The chain runs to 37 residues: Large ribosomal subunit protein bL36 (37 aa).

This sequence belongs to the bacterial ribosomal protein bL36 family.

This is Large ribosomal subunit protein bL36 from Streptomyces griseus subsp. griseus (strain JCM 4626 / CBS 651.72 / NBRC 13350 / KCC S-0626 / ISP 5235).